We begin with the raw amino-acid sequence, 304 residues long: Putative metal ion transporter ZIPCO (304 aa).

The next 8 membrane-spanning stretches (helical) occupy residues 1 to 21, 46 to 66, 74 to 94, 158 to 178, 183 to 203, 218 to 238, 243 to 263, and 275 to 295; these read MWLK…VIYL, VASG…VIGL, IYCC…TDIL, FFIV…IGSL, PIII…LMIY, IYAW…VLSF, FVEI…SFNM, and FYIS…MIVF.

The protein resides in the cell membrane. Its function is as follows. Putative transporter for the divalent zinc and iron cations. Required for the development of liver-stage parasites. The protein is Putative metal ion transporter ZIPCO of Plasmodium berghei (strain Anka).